The primary structure comprises 270 residues: Phosphatidate cytidylyltransferase (270 aa).

Transmembrane regions (helical) follow at residues 19-39 (LWLT…IGLA), 53-73 (TAFS…LLIL), 76-96 (GALL…VTQW), 101-121 (GWPA…SLLR), 126-146 (FGFT…IAAY), 183-203 (LVAS…ALLL), and 248-268 (ALLY…AIFF).

The protein belongs to the CDS family.

The protein localises to the cell inner membrane. The catalysed reaction is a 1,2-diacyl-sn-glycero-3-phosphate + CTP + H(+) = a CDP-1,2-diacyl-sn-glycerol + diphosphate. Its pathway is phospholipid metabolism; CDP-diacylglycerol biosynthesis; CDP-diacylglycerol from sn-glycerol 3-phosphate: step 3/3. This Brucella suis biovar 1 (strain 1330) protein is Phosphatidate cytidylyltransferase (cdsA).